A 583-amino-acid chain; its full sequence is Propane 2-monooxygenase operon transcriptional activator MimR (583 aa).

The 194-residue stretch at 320-513 folds into the Sigma-54 factor interaction domain; sequence LAGQSSSFRR…LRHVLTETVR (194 aa). ATP is bound by residues 349-356 and 395-404; these read ERGSGRTY and SADFAVIVSD.

Acts as a transcriptional activator of the mimABCD operon encoding the propane 2-monooxygenase complex. This chain is Propane 2-monooxygenase operon transcriptional activator MimR, found in Mycolicibacterium smegmatis (strain ATCC 700084 / mc(2)155) (Mycobacterium smegmatis).